A 125-amino-acid polypeptide reads, in one-letter code: Large ribosomal subunit protein bL12 (125 aa).

It belongs to the bacterial ribosomal protein bL12 family. In terms of assembly, homodimer. Part of the ribosomal stalk of the 50S ribosomal subunit. Forms a multimeric L10(L12)X complex, where L10 forms an elongated spine to which 2 to 4 L12 dimers bind in a sequential fashion. Binds GTP-bound translation factors.

Its function is as follows. Forms part of the ribosomal stalk which helps the ribosome interact with GTP-bound translation factors. Is thus essential for accurate translation. The sequence is that of Large ribosomal subunit protein bL12 from Polaromonas naphthalenivorans (strain CJ2).